The primary structure comprises 413 residues: Intracellular hyaluronan-binding protein 4 (413 aa).

Residues serine 7 and serine 36 each carry the phosphoserine modification. The stretch at 40–64 (DILREAERRRQQQLQRKRRDEAAAA) forms a coiled coil. A disordered region spans residues 42-206 (LREAERRRQQ…RGGPGNRVFD (165 aa)). The span at 62 to 82 (AAAAGAGPRGGRSPAGASGHR) shows a compositional bias: low complexity. Position 70 is an omega-N-methylarginine (arginine 70). Serine 74 is subject to Phosphoserine. The segment covering 87–97 (GRRESQKERKS) has biased composition (basic and acidic residues). Serine 108 carries the post-translational modification Phosphoserine. Basic and acidic residues predominate over residues 139–182 (MLERAERRSYREYRPYETERQADFTAEKFPDEKPGDRFDRDRPL). A compositionally biased stretch (gly residues) spans 184–201 (GRGGPRGGMRGRGRGGPG). Residues lysine 213 and lysine 276 each participate in a glycyl lysine isopeptide (Lys-Gly) (interchain with G-Cter in SUMO1); alternate cross-link. Glycyl lysine isopeptide (Lys-Gly) (interchain with G-Cter in SUMO2); alternate cross-links involve residues lysine 213 and lysine 276. The disordered stretch occupies residues 227–320 (VRTEDNMGGC…IRKPESTVPS (94 aa)). Residues 294-315 (DEWKNLQEQTRPKPEFNIRKPE) show a composition bias toward basic and acidic residues. Lysine 336 participates in a covalent cross-link: Glycyl lysine isopeptide (Lys-Gly) (interchain with G-Cter in SUMO1); alternate. Residue lysine 336 forms a Glycyl lysine isopeptide (Lys-Gly) (interchain with G-Cter in SUMO2); alternate linkage. Phosphothreonine; by PKC occurs at positions 354 and 375. Residues 360-413 (NFGNLPRPGRGARGGTRGGRGRIRRAENYGPRAEVVMQDVAPNPDDPEDFPALS) are disordered. Positions 404 to 413 (DDPEDFPALS) are enriched in acidic residues.

It belongs to the SERBP1-HABP4 family. In terms of assembly, associates with ribosomes; promoting ribosome stabilization. Interacts with EEF2/eEF2; promoting ribosome stabilization. Interacts with FMR1. Interacts with FXR1 and FXR2. Interacts with CHD3 (via C-terminus). Interacts (via C-terminus) with RACK1. Interacts with p53/TP53. Interacts (via N-terminus) with SRSF9; this interaction is direct. Interacts with SYNCRIP; this interaction is direct. Interacts with MEF2C (via N-terminus); this interaction decreases DNA-binding activity of MEF2C in myocardial cells in response to mechanical stress. Interacts with PRMT1 (via N-terminus). Interacts with SPIN1. In terms of processing, methylated. Methylation is decreased by phorbol 12-myristate 13-acetate (PMA)-activated PKC, in vitro. Post-translationally, phosphorylated by phorbol 12-myristate 13-acetate (PMA)-activated PKC isoforms at Thr-354 and Thr-375. As to expression, highly expressed in brain, heart, and kidney, and moderately expressed in skeletal muscle. Also expressed in a variety of tumor cell lines and in activated but not resting leukocytes.

The protein resides in the nucleus. It is found in the cytoplasm. The protein localises to the stress granule. Its subcellular location is the sarcoplasm. It localises to the nuclear body. The protein resides in the nucleolus. It is found in the nucleus speckle. The protein localises to the cajal body. Its subcellular location is the gem. Ribosome-binding protein that promotes ribosome hibernation, a process during which ribosomes are stabilized in an inactive state and preserved from proteasomal degradation. Acts via its association with EEF2/eEF2 factor at the A-site of the ribosome, promoting ribosome stabilization in an inactive state compatible with storage. Plays a key role in ribosome hibernation in the mature oocyte by promoting ribosome stabilization. Ribosomes, which are produced in large quantities during oogenesis, are stored and translationally repressed in the oocyte and early embryo. Also binds RNA, regulating transcription and pre-mRNA splicing. Binds (via C-terminus) to poly(U) RNA. Seems to play a role in PML-nuclear bodies formation. Negatively regulates DNA-binding activity of the transcription factor MEF2C in myocardial cells in response to mechanical stress. The sequence is that of Intracellular hyaluronan-binding protein 4 from Homo sapiens (Human).